Consider the following 410-residue polypeptide: PHAF1 protein At3g51130 (410 aa).

The protein belongs to the PHAF1 family.

The sequence is that of PHAF1 protein At3g51130 from Arabidopsis thaliana (Mouse-ear cress).